A 430-amino-acid chain; its full sequence is Glutamyl-tRNA reductase (430 aa).

Substrate-binding positions include 50 to 53, serine 108, 113 to 115, and glutamine 119; these read TCNR and EPQ. Residue cysteine 51 is the Nucleophile of the active site. 188-193 is an NADP(+) binding site; the sequence is GAGEMA.

It belongs to the glutamyl-tRNA reductase family. In terms of assembly, homodimer.

It catalyses the reaction (S)-4-amino-5-oxopentanoate + tRNA(Glu) + NADP(+) = L-glutamyl-tRNA(Glu) + NADPH + H(+). It functions in the pathway porphyrin-containing compound metabolism; protoporphyrin-IX biosynthesis; 5-aminolevulinate from L-glutamyl-tRNA(Glu): step 1/2. Catalyzes the NADPH-dependent reduction of glutamyl-tRNA(Glu) to glutamate 1-semialdehyde (GSA). The sequence is that of Glutamyl-tRNA reductase from Lawsonia intracellularis (strain PHE/MN1-00).